The chain runs to 872 residues: Protein SCD5 (872 aa).

Disordered stretches follow at residues 1–98 (MSFD…SGGD) and 209–239 (PKPR…TGDQ). Residues 48-85 (FWDQGSRSHSDTTLSYRNNHSNTAADNATNVSSPQKDN) show a composition bias toward polar residues. The KKRVK motif; Required for interaction with GLC7, endocytosis and actin cytoskeleton organization signature appears at 272 to 276 (KKVRF). Disordered stretches follow at residues 280–321 (ITFQ…LDFT) and 338–358 (SGLV…KKVL). Polar residues-rich tracts occupy residues 284–296 (DPPN…SNNS) and 339–348 (GLVSSLPSEQ). Repeat copies occupy residues 405–424 (QLPL…HLVR), 439–458 (QTGL…YLMR), 479–498 (SGGL…YLMK), 534–545 (SPNITLPQSNQQ), 564–575 (SPQHTYSNNVRI), 593–604 (PPQNTLPQHQQS), 608–619 (SPQNTIPQHQRS), 623–634 (SPQNTFTQNQPI), 636–647 (SPQHTYSNNQAT), 650–661 (SPQNTYTNNQQQ), 683–694 (PPQHMYSNVQKQ), and 717–728 (SPQNAANSYFQS). Residues 405 to 448 (QLPLEPLKPTATGSANHLVREEYNQGLHPSNGAIQTGLQPLKPT) are 3 X 20 AA approximate repeats. A phosphothreonine; by PRK1 mark is found at Thr416 and Thr450. Residues 460–489 (HMEQPQSIKPSSTPETVTNSGGLQPLKPTA) form a disordered region. A compositionally biased stretch (polar residues) spans 462-481 (EQPQSIKPSSTPETVTNSGG). Thr490 carries the phosphothreonine; by PRK1 modification. 2 disordered regions span residues 516-571 (QFTN…TYSN) and 591-620 (AFPP…QRSQ). The interval 534–728 (SPNITLPQSN…QNAANSYFQS (195 aa)) is 9 X 12 AA approximate repeats. At Ser564 the chain carries Phosphoserine. The segment covering 594–620 (PQNTLPQHQQSHLLSPQNTIPQHQRSQ) has biased composition (polar residues). A disordered region spans residues 649 to 681 (ISPQNTYTNNQQQPQHLPPPPPPRAQQQQQGAI). The span at 651-663 (PQNTYTNNQQQPQ) shows a compositional bias: low complexity. Residues 697 to 727 (LVPTQPSYTNSPSIQSPNFLSPQNAANSYFQ) show a composition bias toward polar residues. 2 disordered regions span residues 697–758 (LVPT…ISSF) and 806–838 (NSDI…QFPF). The segment covering 728–745 (SLLSSSPSPNPTPSNAST) has biased composition (low complexity). Composition is skewed to polar residues over residues 746–758 (VNGN…ISSF) and 806–815 (NSDIHSQPNK). Low complexity predominate over residues 823 to 835 (QQVHQQQQQQQQQ).

In terms of assembly, interacts (via KKVRF motif) with phosphatase GLC7. Phosphorylation by PRK1 and/or AKL1 on Thr-416, Thr-450 and Thr-490 of repeats 1-1, 1-2 and/or 1-3 negatively regulates SCD5 function in endocytosis and actin cytoskeleton organization.

It is found in the membrane. Functionally, regulates both fluid phase and receptor-mediated endocytosis. Involved in vesicular transport at a late stage of the secretory pathway. Regulates actin cytoskeleton organization. The sequence is that of Protein SCD5 (SCD5) from Saccharomyces cerevisiae (strain ATCC 204508 / S288c) (Baker's yeast).